The sequence spans 119 residues: Ubiquinone biosynthesis accessory factor UbiK (119 aa).

The stretch at 79-99 (LLRTREKLALLEQRLSELEAR) forms a coiled coil. A compositionally biased stretch (basic and acidic residues) spans 96–106 (LEARDKPEEVK). The interval 96-119 (LEARDKPEEVKPAPAIPPVDPQQE) is disordered. The segment covering 109–119 (PAIPPVDPQQE) has biased composition (pro residues).

The protein belongs to the UbiK family. Homotrimer.

Its subcellular location is the cytoplasm. It participates in cofactor biosynthesis; ubiquinone biosynthesis. Required for efficient ubiquinone (coenzyme Q) biosynthesis under aerobic conditions. UbiK is probably an accessory factor of Ubi enzymes and facilitates ubiquinone biosynthesis by acting as an assembly factor, a targeting factor, or both. Dispensable for ubiquinone biosynthesis under anaerobiosis. Required for proliferation in macrophages and virulence in mice. Significantly contributes to colonization and invasion as well as host inflammation and innate immunity after infection. In vitro, has membrane fusogenic activity at acidic pH. The polypeptide is Ubiquinone biosynthesis accessory factor UbiK (Salmonella typhimurium (strain LT2 / SGSC1412 / ATCC 700720)).